The sequence spans 868 residues: Alanine--tRNA ligase (868 aa).

Residues histidine 555, histidine 559, cysteine 657, and histidine 661 each coordinate Zn(2+). The disordered stretch occupies residues 828-847 (SQVGGKGGGRPDMAQAGGSE).

Belongs to the class-II aminoacyl-tRNA synthetase family. Zn(2+) serves as cofactor.

The protein resides in the cytoplasm. It carries out the reaction tRNA(Ala) + L-alanine + ATP = L-alanyl-tRNA(Ala) + AMP + diphosphate. Functionally, catalyzes the attachment of alanine to tRNA(Ala) in a two-step reaction: alanine is first activated by ATP to form Ala-AMP and then transferred to the acceptor end of tRNA(Ala). Also edits incorrectly charged Ser-tRNA(Ala) and Gly-tRNA(Ala) via its editing domain. The chain is Alanine--tRNA ligase from Pseudoalteromonas translucida (strain TAC 125).